Here is a 630-residue protein sequence, read N- to C-terminus: Protein zwilch homolog (630 aa).

Belongs to the ZWILCH family. As to quaternary structure, component of the RZZ complex composed of rod-1, czw-1 and zwl-1. Interacts with the spindly-like protein spdl-1. Interacts with NDC80 complex component ndc-80.

Its subcellular location is the cytoplasm. It is found in the cell cortex. The protein localises to the chromosome. The protein resides in the centromere. It localises to the kinetochore. Its subcellular location is the cytoskeleton. It is found in the spindle. Essential component of the mitotic checkpoint, which prevents cells from prematurely exiting mitosis. Required for chromosome segregation, the assembly of the dynein-dynactin and mdf-1-mdf-2 complexes onto kinetochores and spindle pole separation. Its function related to the spindle assembly machinery and kinetochore-microtubule attachments likely depends on its association in the mitotic RZZ complex. The RZZ complex recruits the spindly-like protein spdl-1 to kinetochores. To prevent irregular chromosome segregation, the complex also inhibits the attachment of the kinetochore-associated NDC80 complex to microtubules. The recruitment of spdl-1 to kinetochores relieves this inhibition. Required for embryonic development. The sequence is that of Protein zwilch homolog (zwl-1) from Caenorhabditis elegans.